The chain runs to 940 residues: MKSNLRYGIRKHKLGAASVFLGTMIVVGMGQEKEAAASEQNNTTVEESGSSATESKASETQTTTNNVNTIDETQSYSATSTEQPSQSTQVTTEEAPKTVQAPKVETSRVDLPSEKVADKETTGTQVDIAQPSNVSEIKPRMKRSTDVTAVAEKEVVEETKATGTDVTNKVEVEEGSEIVGHKQDTNVVNPHNAERVTLKYKWKFGEGIKAGDYFDFTLSDNVETHGISTLRKVPEIKSTDGQVMATGEIIGERKVRYTFKEYVQEKKDLTAELSLNLFIDPTTVTQKGNQNVEVKLGETTVSKIFNIQYLGGVRDNWGVTANGRIDTLNKVDGKFSHFAYMKPNNQSLSSVTVTGQVTKGNKPGVNNPTVKVYKHIGSDDLAESVYAKLDDVSKFEDVTDNMSLDFDTNGGYSLNFNNLDQSKNYVIKYEGYYDSNASNLEFQTHLFGYYNYYYTSNLTWKNGVAFYSNNAQGDGKDKLKEPIIEHSTPIELEFKSEPPVEKHELTGTIEESNDSKPIDFEYHTAVEGAEGHAEGTIETEEDSIHVDFEESTHENSKHHADVVEYEEDTNPGGGQVTTESNLVEFDEDSTKGIVTGAVSDHTTIEDTKEYTTESNLIELVDELPEEHGQAQGPIEEITENNHHISHSGLGTENGHGNYGVIEEIEENSHVDIKSELGYEGGQNSGNQSFEEDTEEDKPKYEQGGNIVDIDFDSVPQIHGQNNGNQSFEEDTEKDKPKYEQGGNIIDIDFDSVPHIHGFNKHTEIIEEDTNKDKPNYQFGGHNSVDFEEDTLPQVSGHNEGQQTIEEDTTPPIVPPTPPTPEVPSEPETPTPPTPEVPSEPETPTPPTPEVPTEPGKPIPPAKEEPKKPSKPVEQGKVVTPVIEINEKVKAVVPTKKAQSKKSELPETGGEESTNNGMLFGGLFSILGLALLRRNKKNHKA.

The first 36 residues, 1–36, serve as a signal peptide directing secretion; sequence MKSNLRYGIRKHKLGAASVFLGTMIVVGMGQEKEAA. Residues 36–111 form a disordered region; sequence AASEQNNTTV…PKVETSRVDL (76 aa). The segment covering 38–92 has biased composition (polar residues); that stretch reads SEQNNTTVEESGSSATESKASETQTTTNNVNTIDETQSYSATSTEQPSQSTQVTT. The fibrinogen/elastin/tropoelastin-binding stretch occupies residues 162 to 480; sequence TGTDVTNKVE…AQGDGKDKLK (319 aa). 3 disordered regions span residues 676–746, 764–878, and 892–918; these read LGYE…NIID, IIEE…GKVV, and VPTK…NGML. Residues 681–718 form a D-1 repeat; the sequence is GQNSGNQSFEEDTEEDKPKYEQGGNIVDIDFDSVPQIH. Residues 719–756 form a D-2 repeat; that stretch reads GQNNGNQSFEEDTEKDKPKYEQGGNIIDIDFDSVPHIH. The D-3 repeat unit spans residues 757 to 795; the sequence is GFNKHTEIIEEDTNKDKPNYQFGGHNSVDFEEDTLPQVS. A compositionally biased stretch (basic and acidic residues) spans 764 to 774; sequence IIEEDTNKDKP. Residues 792–802 show a composition bias toward polar residues; sequence PQVSGHNEGQQ. One copy of the D-4; truncated repeat lies at 796-814; sequence GHNEGQQTIEEDTTPPIVP. Positions 811 to 860 are enriched in pro residues; it reads PIVPPTPPTPEVPSEPETPTPPTPEVPSEPETPTPPTPEVPTEPGKPIPP. WR repeat units lie at residues 815 to 828, 829 to 842, and 857 to 870; these read PTPP…EPET and PIPP…KPSK. An LPXTG sorting signal motif is present at residues 904–908; it reads LPETG. Position 907 is a pentaglycyl murein peptidoglycan amidated threonine (threonine 907). Residues 908-940 constitute a propeptide, removed by sortase; it reads GGEESTNNGMLFGGLFSILGLALLRRNKKNHKA.

Interacts with host PLG; this interaction provides active plasmin on the surface of bacteria cells. Interacts with host histones.

It localises to the secreted. The protein localises to the cell wall. In terms of biological role, multifunctional protein which promotes bacterial attachment to fibrinogen, elastin and fibronectin. Also promotes the accumulation phase and the primary attachment phase of biofilm formation. In addition, protects against the antimicrobial activity of histones. Mechanistically, captures histones and prevents them from reaching the bacterial membrane and simultaneously binds plasminogen, thereby promoting its conversion to plasmin to destroy the bound histones. This chain is Fibronectin-binding protein B, found in Staphylococcus aureus (strain USA300).